Consider the following 375-residue polypeptide: 23S rRNA (uracil(747)-C(5))-methyltransferase RlmC (375 aa).

The [4Fe-4S] cluster site is built by Cys-3, Cys-11, Cys-14, and Cys-87. The S-adenosyl-L-methionine site is built by Gln-212, Phe-241, Glu-262, and Asn-307. The active-site Nucleophile is the Cys-334.

Belongs to the class I-like SAM-binding methyltransferase superfamily. RNA M5U methyltransferase family. RlmC subfamily.

It carries out the reaction uridine(747) in 23S rRNA + S-adenosyl-L-methionine = 5-methyluridine(747) in 23S rRNA + S-adenosyl-L-homocysteine + H(+). In terms of biological role, catalyzes the formation of 5-methyl-uridine at position 747 (m5U747) in 23S rRNA. The protein is 23S rRNA (uracil(747)-C(5))-methyltransferase RlmC of Escherichia coli O127:H6 (strain E2348/69 / EPEC).